Here is a 122-residue protein sequence, read N- to C-terminus: Fluoride-specific ion channel FluC 2 (122 aa).

4 consecutive transmembrane segments (helical) span residues 1-21, 33-53, 62-82, and 102-122; these read MAWLYVGCGGIAGTLARFLLS, PLGTLFVNLSGAFLLGLLLAL, VTLALGTGFVGAYTTFSTFTY, and GSILGGLLLAWLGWLAAGSLF. Na(+)-binding residues include G72 and T75.

The protein belongs to the fluoride channel Fluc/FEX (TC 1.A.43) family.

The protein localises to the cell membrane. The catalysed reaction is fluoride(in) = fluoride(out). Its activity is regulated as follows. Na(+) is not transported, but it plays an essential structural role and its presence is essential for fluoride channel function. In terms of biological role, fluoride-specific ion channel. Important for reducing fluoride concentration in the cell, thus reducing its toxicity. This is Fluoride-specific ion channel FluC 2 from Moorella thermoacetica (strain ATCC 39073 / JCM 9320).